A 235-amino-acid chain; its full sequence is Small ribosomal subunit protein uS3 (235 aa).

A KH type-2 domain is found at 39 to 107 (VRKFLLGQLS…PTKLNISEIR (69 aa)).

Belongs to the universal ribosomal protein uS3 family. In terms of assembly, part of the 30S ribosomal subunit. Forms a tight complex with proteins S10 and S14.

In terms of biological role, binds the lower part of the 30S subunit head. Binds mRNA in the 70S ribosome, positioning it for translation. The polypeptide is Small ribosomal subunit protein uS3 (Blochmanniella floridana).